The sequence spans 484 residues: Bifunctional protein GlmU (484 aa).

A pyrophosphorylase region spans residues 1–240 (MSASRPAAVM…RTEVEGVNDR (240 aa)). UDP-N-acetyl-alpha-D-glucosamine is bound by residues 12–15 (LAAG), Lys26, Gln79, and 84–85 (GT). Residue Asp113 coordinates Mg(2+). UDP-N-acetyl-alpha-D-glucosamine-binding residues include Gly150, Glu165, Asn180, and Asn238. Asn238 provides a ligand contact to Mg(2+). The linker stretch occupies residues 241–261 (VQLAEARRLLNARLLEQLMRD). The segment at 262 to 484 (GVTVVDPAST…RARARSEEDR (223 aa)) is N-acetyltransferase. UDP-N-acetyl-alpha-D-glucosamine-binding residues include Arg343 and Lys361. The active-site Proton acceptor is His373. 2 residues coordinate UDP-N-acetyl-alpha-D-glucosamine: Tyr376 and Asn387. Acetyl-CoA-binding positions include Ala390, 396–397 (NY), Ser415, and Ala433. Residues 457-484 (EGWVERKRPGTPAAQAAERARARSEEDR) form a disordered region. Over residues 474-484 (ERARARSEEDR) the composition is skewed to basic and acidic residues.

The protein in the N-terminal section; belongs to the N-acetylglucosamine-1-phosphate uridyltransferase family. This sequence in the C-terminal section; belongs to the transferase hexapeptide repeat family. Homotrimer. The cofactor is Mg(2+).

The protein resides in the cytoplasm. It carries out the reaction alpha-D-glucosamine 1-phosphate + acetyl-CoA = N-acetyl-alpha-D-glucosamine 1-phosphate + CoA + H(+). The enzyme catalyses N-acetyl-alpha-D-glucosamine 1-phosphate + UTP + H(+) = UDP-N-acetyl-alpha-D-glucosamine + diphosphate. Its pathway is nucleotide-sugar biosynthesis; UDP-N-acetyl-alpha-D-glucosamine biosynthesis; N-acetyl-alpha-D-glucosamine 1-phosphate from alpha-D-glucosamine 6-phosphate (route II): step 2/2. It functions in the pathway nucleotide-sugar biosynthesis; UDP-N-acetyl-alpha-D-glucosamine biosynthesis; UDP-N-acetyl-alpha-D-glucosamine from N-acetyl-alpha-D-glucosamine 1-phosphate: step 1/1. It participates in bacterial outer membrane biogenesis; LPS lipid A biosynthesis. Its function is as follows. Catalyzes the last two sequential reactions in the de novo biosynthetic pathway for UDP-N-acetylglucosamine (UDP-GlcNAc). The C-terminal domain catalyzes the transfer of acetyl group from acetyl coenzyme A to glucosamine-1-phosphate (GlcN-1-P) to produce N-acetylglucosamine-1-phosphate (GlcNAc-1-P), which is converted into UDP-GlcNAc by the transfer of uridine 5-monophosphate (from uridine 5-triphosphate), a reaction catalyzed by the N-terminal domain. This is Bifunctional protein GlmU from Thermobifida fusca (strain YX).